The following is a 684-amino-acid chain: DNA-directed RNA polymerase subunit beta' (684 aa).

Residues Cys69, Cys71, Cys87, and Cys90 each coordinate Zn(2+). Mg(2+) is bound by residues Asp491, Asp493, and Asp495.

The protein belongs to the RNA polymerase beta' chain family. RpoC1 subfamily. In terms of assembly, in plastids the minimal PEP RNA polymerase catalytic core is composed of four subunits: alpha, beta, beta', and beta''. When a (nuclear-encoded) sigma factor is associated with the core the holoenzyme is formed, which can initiate transcription. Requires Mg(2+) as cofactor. Zn(2+) serves as cofactor.

It localises to the plastid. Its subcellular location is the chloroplast. It catalyses the reaction RNA(n) + a ribonucleoside 5'-triphosphate = RNA(n+1) + diphosphate. DNA-dependent RNA polymerase catalyzes the transcription of DNA into RNA using the four ribonucleoside triphosphates as substrates. The polypeptide is DNA-directed RNA polymerase subunit beta' (Phaseolus vulgaris (Kidney bean)).